A 76-amino-acid chain; its full sequence is UPF0154 protein LCA_1273 (76 aa).

The chain crosses the membrane as a helical span at residues 3 to 23; it reads IGIGVLIFVIGALLGAVAGFF. Residues 55–76 are disordered; sequence PSEKKLNQMMSSMKAQQKRSKK.

Belongs to the UPF0154 family.

Its subcellular location is the cell membrane. This chain is UPF0154 protein LCA_1273, found in Latilactobacillus sakei subsp. sakei (strain 23K) (Lactobacillus sakei subsp. sakei).